We begin with the raw amino-acid sequence, 180 residues long: Signal peptidase complex subunit 3 (180 aa).

The Cytoplasmic segment spans residues 1-12; it reads MHNLLSRANALL. A helical; Signal-anchor for type II membrane protein membrane pass occupies residues 13-33; it reads AFTLWVMAAVTAACFLSTVFL. Residues 34-180 lie on the Lumenal side of the membrane; it reads DYTVPTKLTV…PTTYTTTRRS (147 aa). The N-linked (GlcNAc...) asparagine glycan is linked to asparagine 141.

This sequence belongs to the SPCS3 family. In terms of assembly, component of the signal peptidase complex (SPC) composed of a catalytic subunit sec-11 and three accessory subunits spcs-1, spcs-2 and spcs-3. The complex induces a local thinning of the ER membrane which is used to measure the length of the signal peptide (SP) h-region of protein substrates. This ensures the selectivity of the complex towards h-regions shorter than 18-20 amino acids.

Its subcellular location is the endoplasmic reticulum membrane. Essential component of the signal peptidase complex (SPC) which catalyzes the cleavage of N-terminal signal sequences from nascent proteins as they are translocated into the lumen of the endoplasmic reticulum. Essential for the SPC catalytic activity, possibly by stabilizing and positioning the active center of the complex close to the lumenal surface. This Caenorhabditis elegans protein is Signal peptidase complex subunit 3.